The following is a 249-amino-acid chain: Spindlin-4 (249 aa).

3 tudor-like domain regions span residues 41-90 (VGCR…LELH), 119-168 (VGKA…YTLL), and 201-246 (VGKQ…YGLV). Histone H3K4me3 and H3R8me2a binding regions lie at residues 80–85 (GKDSVY), glutamate 128, and 237–239 (DIH).

It belongs to the SPIN/STSY family. Interacts with C11orf84/SPINDOC. Associates with chromatin.

The protein resides in the cytoplasm. It localises to the nucleus. Binds to acetylated and methylated histones, including H3K4me3 and H4K20me3, probably acting as a histone reader that recognizes chromatin marks to mediate downstream cellular effects. Promotes canonical WNT signaling, and is involved in the down-regulation of cell proliferation. The polypeptide is Spindlin-4 (Spin4) (Mus musculus (Mouse)).